The primary structure comprises 215 residues: 3-isopropylmalate dehydratase small subunit (215 aa).

The protein belongs to the LeuD family. LeuD type 1 subfamily. As to quaternary structure, heterodimer of LeuC and LeuD.

It carries out the reaction (2R,3S)-3-isopropylmalate = (2S)-2-isopropylmalate. Its pathway is amino-acid biosynthesis; L-leucine biosynthesis; L-leucine from 3-methyl-2-oxobutanoate: step 2/4. Functionally, catalyzes the isomerization between 2-isopropylmalate and 3-isopropylmalate, via the formation of 2-isopropylmaleate. The chain is 3-isopropylmalate dehydratase small subunit from Leptothrix cholodnii (strain ATCC 51168 / LMG 8142 / SP-6) (Leptothrix discophora (strain SP-6)).